Consider the following 729-residue polypeptide: MDKATIQAHKISDEEYEEILKILGREPNLLELGIFSAMWSEHCSYKSSKKYLNGFPTKAPWVIQGPGENAGVIDVGDGVAAVFKMESHNHPSFIEPFQGAATGVGGILRDVFTMGARVVANMNSLRFGEIRGESELAKKHRYLLKGSVAGIGHYGNCMGIPTIGGETTFDPSFNGNILINAFALGLCKSDEIFYGKAEGVGNPVIYVGSKTGRDGLGGAVMASDSFNDENKSLRPTVQVGDPFAEKLLMEACLELFKKDYIIGIQDMGAAGLTSSSFEMAGRSGSGMKMYLDRVPMREVGMTPYELMLSESQERMLICAKKGFEQKVLEIFRKWDLDAEIIGEVTSSGVMQLYWHDELAGEIPIGPLSEAAPVLDRPVARPKYLDEIANLEIPNNIDNKTAFFKLLKEPEVLNKSFIYDQYDANIQTNTIKQPGCLGAATIRIKESGRAIAMAAQCDPRANFVDPKIGAARAVAAAGRKVAMSGAVPLAITDCLNYGNPQNPEVMWQFKEGCEGIKEACRELNTPVVSGNVSLYNDTDGISVYPTPAIVTVGVNEDANLNLKSTFSSEGRAIYLLGETSGEFAASLYAKALFNVVGGKLKEVDYKAERALWELVIEANKEQILEFANSVGVGGLAITLAKMASISNIGVNCEVKFKEPNFIFDESFSRAVVGVKDEAKFEALATKFGVKFEKIGVSGGKRFKLNEIDESLEDVREIYLNEFAKIVKKED.

His-42 is an active-site residue. Tyr-45 and Lys-84 together coordinate ATP. Residue Glu-86 participates in Mg(2+) binding. Substrate-binding positions include 87–90 (SHNH) and Arg-109. The active-site Proton acceptor is the His-88. Asp-110 is a binding site for Mg(2+). Residue Gln-238 participates in substrate binding. Mg(2+) is bound at residue Asp-266. Substrate is bound at residue 310–312 (ESQ). The ATP site is built by Asp-492 and Gly-529. Asn-530 contacts Mg(2+). Ser-532 provides a ligand contact to substrate.

Belongs to the FGAMS family. Monomer. Part of the FGAM synthase complex composed of 1 PurL, 1 PurQ and 2 PurS subunits.

The protein resides in the cytoplasm. It carries out the reaction N(2)-formyl-N(1)-(5-phospho-beta-D-ribosyl)glycinamide + L-glutamine + ATP + H2O = 2-formamido-N(1)-(5-O-phospho-beta-D-ribosyl)acetamidine + L-glutamate + ADP + phosphate + H(+). Its pathway is purine metabolism; IMP biosynthesis via de novo pathway; 5-amino-1-(5-phospho-D-ribosyl)imidazole from N(2)-formyl-N(1)-(5-phospho-D-ribosyl)glycinamide: step 1/2. Its function is as follows. Part of the phosphoribosylformylglycinamidine synthase complex involved in the purines biosynthetic pathway. Catalyzes the ATP-dependent conversion of formylglycinamide ribonucleotide (FGAR) and glutamine to yield formylglycinamidine ribonucleotide (FGAM) and glutamate. The FGAM synthase complex is composed of three subunits. PurQ produces an ammonia molecule by converting glutamine to glutamate. PurL transfers the ammonia molecule to FGAR to form FGAM in an ATP-dependent manner. PurS interacts with PurQ and PurL and is thought to assist in the transfer of the ammonia molecule from PurQ to PurL. The chain is Phosphoribosylformylglycinamidine synthase subunit PurL from Campylobacter concisus (strain 13826).